Reading from the N-terminus, the 139-residue chain is Ribulose bisphosphate carboxylase small subunit (139 aa).

It belongs to the RuBisCO small chain family. Heterohexadecamer of 8 large and 8 small subunits.

It localises to the plastid. Its subcellular location is the chloroplast. Functionally, ruBisCO catalyzes two reactions: the carboxylation of D-ribulose 1,5-bisphosphate, the primary event in carbon dioxide fixation, as well as the oxidative fragmentation of the pentose substrate in the photorespiration process. Both reactions occur simultaneously and in competition at the same active site. Although the small subunit is not catalytic it is essential for maximal activity. This Chrysotila carterae (Marine alga) protein is Ribulose bisphosphate carboxylase small subunit.